The primary structure comprises 89 residues: Small ribosomal subunit protein uS15 (89 aa).

The protein belongs to the universal ribosomal protein uS15 family. Part of the 30S ribosomal subunit. Forms a bridge to the 50S subunit in the 70S ribosome, contacting the 23S rRNA.

In terms of biological role, one of the primary rRNA binding proteins, it binds directly to 16S rRNA where it helps nucleate assembly of the platform of the 30S subunit by binding and bridging several RNA helices of the 16S rRNA. Functionally, forms an intersubunit bridge (bridge B4) with the 23S rRNA of the 50S subunit in the ribosome. In Solibacter usitatus (strain Ellin6076), this protein is Small ribosomal subunit protein uS15.